A 253-amino-acid chain; its full sequence is Peptidase inhibitor R3HDML (253 aa).

The N-terminal stretch at 1-24 (MPLLPSTVGLAGLLFWAGQAVNAL) is a signal peptide. A propeptide spanning residues 25 to 56 (IMPNATPAPAQPESTAMRLLSGLEVPRYRRKR) is cleaved from the precursor. The SCP domain maps to 67–207 (LDYHNHIRAS…HRAAYLVCNY (141 aa)). The N-linked (GlcNAc...) asparagine glycan is linked to N120.

It belongs to the CRISP family.

It localises to the secreted. Putative serine protease inhibitor. The chain is Peptidase inhibitor R3HDML (R3HDML) from Homo sapiens (Human).